An 87-amino-acid polypeptide reads, in one-letter code: uncharacterized protein (87 aa).

The region spanning 4 to 87 is the 2Fe-2S ferredoxin-type domain; sequence SIIEITNIKK…KPKGNITIKI (84 aa). Residues Cys38, Cys43, Cys46, and Cys75 each contribute to the [2Fe-2S] cluster site.

Requires [2Fe-2S] cluster as cofactor.

This is an uncharacterized protein from Buchnera aphidicola subsp. Acyrthosiphon pisum (strain APS) (Acyrthosiphon pisum symbiotic bacterium).